A 151-amino-acid polypeptide reads, in one-letter code: MPLLATGKKFIRTIEQSGAVGIYVPSEGGFEGRYKRRLRATGYLTLFVSAPGMGDLASYFTDVHGVRPPHLGKNQIRTYFLPPFVTYQLENLPPQAKGLALWLYDGKRLAKQELAYLSAITASEPRLKVVVELGGARSFEWQPLSDIVAAA.

It belongs to the complex I NdhN subunit family. NDH-1 can be composed of about 15 different subunits; different subcomplexes with different compositions have been identified which probably have different functions.

Its subcellular location is the cellular thylakoid membrane. It catalyses the reaction a plastoquinone + NADH + (n+1) H(+)(in) = a plastoquinol + NAD(+) + n H(+)(out). The catalysed reaction is a plastoquinone + NADPH + (n+1) H(+)(in) = a plastoquinol + NADP(+) + n H(+)(out). Its function is as follows. NDH-1 shuttles electrons from an unknown electron donor, via FMN and iron-sulfur (Fe-S) centers, to quinones in the respiratory and/or the photosynthetic chain. The immediate electron acceptor for the enzyme in this species is believed to be plastoquinone. Couples the redox reaction to proton translocation, and thus conserves the redox energy in a proton gradient. Cyanobacterial NDH-1 also plays a role in inorganic carbon-concentration. The polypeptide is NAD(P)H-quinone oxidoreductase subunit N (Acaryochloris marina (strain MBIC 11017)).